The sequence spans 619 residues: Dihydroxy-acid dehydratase (619 aa).

Position 81 (Asp-81) interacts with Mg(2+). Position 122 (Cys-122) interacts with [2Fe-2S] cluster. Asp-123 and Lys-124 together coordinate Mg(2+). Lys-124 bears the N6-carboxylysine mark. Cys-195 lines the [2Fe-2S] cluster pocket. Glu-494 is a Mg(2+) binding site. Ser-520 serves as the catalytic Proton acceptor.

It belongs to the IlvD/Edd family. In terms of assembly, homodimer. It depends on [2Fe-2S] cluster as a cofactor. The cofactor is Mg(2+).

It catalyses the reaction (2R)-2,3-dihydroxy-3-methylbutanoate = 3-methyl-2-oxobutanoate + H2O. It carries out the reaction (2R,3R)-2,3-dihydroxy-3-methylpentanoate = (S)-3-methyl-2-oxopentanoate + H2O. It functions in the pathway amino-acid biosynthesis; L-isoleucine biosynthesis; L-isoleucine from 2-oxobutanoate: step 3/4. Its pathway is amino-acid biosynthesis; L-valine biosynthesis; L-valine from pyruvate: step 3/4. In terms of biological role, functions in the biosynthesis of branched-chain amino acids. Catalyzes the dehydration of (2R,3R)-2,3-dihydroxy-3-methylpentanoate (2,3-dihydroxy-3-methylvalerate) into 2-oxo-3-methylpentanoate (2-oxo-3-methylvalerate) and of (2R)-2,3-dihydroxy-3-methylbutanoate (2,3-dihydroxyisovalerate) into 2-oxo-3-methylbutanoate (2-oxoisovalerate), the penultimate precursor to L-isoleucine and L-valine, respectively. The protein is Dihydroxy-acid dehydratase of Shewanella sp. (strain MR-4).